Reading from the N-terminus, the 268-residue chain is Orotidine 5'-phosphate decarboxylase (268 aa).

Substrate-binding positions include D37, 59-61 (KTH), 91-100 (DRKFADIGNT), Y217, and R235. Residue K93 is the Proton donor of the active site.

Belongs to the OMP decarboxylase family.

It catalyses the reaction orotidine 5'-phosphate + H(+) = UMP + CO2. The protein operates within pyrimidine metabolism; UMP biosynthesis via de novo pathway; UMP from orotate: step 2/2. This chain is Orotidine 5'-phosphate decarboxylase (URA4), found in Maudiozyma exigua (Yeast).